Reading from the N-terminus, the 263-residue chain is Endonuclease 8 (263 aa).

Pro2 (schiff-base intermediate with DNA) is an active-site residue. Catalysis depends on Glu3, which acts as the Proton donor. Catalysis depends on Lys53, which acts as the Proton donor; for beta-elimination activity. DNA is bound by residues Gln70, Arg125, and Asn169. The segment at 229 to 263 (KVFHRDGEPCERCGSIIEKTTLSSRPFYWCPGCQH) adopts an FPG-type zinc-finger fold. Residue Arg253 is the Proton donor; for delta-elimination activity of the active site.

Belongs to the FPG family. Zn(2+) serves as cofactor.

The enzyme catalyses 2'-deoxyribonucleotide-(2'-deoxyribose 5'-phosphate)-2'-deoxyribonucleotide-DNA = a 3'-end 2'-deoxyribonucleotide-(2,3-dehydro-2,3-deoxyribose 5'-phosphate)-DNA + a 5'-end 5'-phospho-2'-deoxyribonucleoside-DNA + H(+). Involved in base excision repair of DNA damaged by oxidation or by mutagenic agents. Acts as a DNA glycosylase that recognizes and removes damaged bases. Has a preference for oxidized pyrimidines, such as thymine glycol, 5,6-dihydrouracil and 5,6-dihydrothymine. Has AP (apurinic/apyrimidinic) lyase activity and introduces nicks in the DNA strand. Cleaves the DNA backbone by beta-delta elimination to generate a single-strand break at the site of the removed base with both 3'- and 5'-phosphates. This Escherichia coli O17:K52:H18 (strain UMN026 / ExPEC) protein is Endonuclease 8.